Reading from the N-terminus, the 552-residue chain is Hydroxylamine reductase (552 aa).

Cys-3, Cys-6, Cys-15, and Cys-21 together coordinate [4Fe-4S] cluster. Hybrid [4Fe-2O-2S] cluster-binding residues include His-247, Glu-271, Cys-315, Cys-407, Cys-435, Cys-460, Glu-495, and Lys-497. At Cys-407 the chain carries Cysteine persulfide.

Belongs to the HCP family. [4Fe-4S] cluster is required as a cofactor. Requires hybrid [4Fe-2O-2S] cluster as cofactor.

The protein localises to the cytoplasm. The catalysed reaction is A + NH4(+) + H2O = hydroxylamine + AH2 + H(+). Its function is as follows. Catalyzes the reduction of hydroxylamine to form NH(3) and H(2)O. The chain is Hydroxylamine reductase from Thermosipho melanesiensis (strain DSM 12029 / CIP 104789 / BI429).